Consider the following 346-residue polypeptide: PhoH-like protein (346 aa).

142–149 (GPAGTGKT) is an ATP binding site.

This sequence belongs to the PhoH family.

Its subcellular location is the cytoplasm. The polypeptide is PhoH-like protein (ybeZ) (Escherichia coli O157:H7).